A 509-amino-acid chain; its full sequence is uncharacterized protein (509 aa).

13 helical membrane-spanning segments follow: residues 14-34, 117-137, 158-178, 188-208, 209-229, 240-260, 303-323, 324-344, 359-379, 399-419, 423-443, 458-478, and 484-504; these read SAFTILFAILILAVGLTWVIP, TIEAVDVMVFIFVLGGMIGVI, EFFIVFCVSVLMVLGGTTCGI, ILVPVFLALGYDAIVCVGAIF, LAASMGTAFSTINPFSVVIAS, IGFRALGLVLGATCVIAYLYW, LILTLFCISFPIMIWGVMVGG, WWFPQMAASFLAITIIIMFIS, ASELVGVSLIIGLARGVNLVL, MPGSVFILGQLVVFIFLGLIV, SGLAVLSMPIMAPLADSVGIP, MLFLAPTGLVLVTLQMLQIPF, and FVMPMIGCLLLIGSILLVVQV.

To E.coli YfcC. This sequence to B.subtilis YcgA.

Its subcellular location is the cell membrane. This is an uncharacterized protein from Haemophilus influenzae (strain ATCC 51907 / DSM 11121 / KW20 / Rd).